The sequence spans 539 residues: GMP synthase [glutamine-hydrolyzing] (539 aa).

Positions 4–203 (KILILDFGSQ…VHDICGCKSD (200 aa)) constitute a Glutamine amidotransferase type-1 domain. Cysteine 82 (nucleophile) is an active-site residue. Residues histidine 177 and glutamate 179 contribute to the active site. The GMPS ATP-PPase domain maps to 204 to 395 (WNMPDYIAEA…LGLPHDMVYR (192 aa)). Residue 231 to 237 (SGGVDSS) participates in ATP binding.

In terms of assembly, homodimer.

The enzyme catalyses XMP + L-glutamine + ATP + H2O = GMP + L-glutamate + AMP + diphosphate + 2 H(+). Its pathway is purine metabolism; GMP biosynthesis; GMP from XMP (L-Gln route): step 1/1. Its function is as follows. Catalyzes the synthesis of GMP from XMP. The protein is GMP synthase [glutamine-hydrolyzing] of Janthinobacterium sp. (strain Marseille) (Minibacterium massiliensis).